The primary structure comprises 395 residues: 1-deoxy-D-xylulose 5-phosphate reductoisomerase (395 aa).

Positions 15, 16, 17, 18, 41, 43, and 126 each coordinate NADPH. Position 127 (K127) interacts with 1-deoxy-D-xylulose 5-phosphate. An NADPH-binding site is contributed by E128. D152 contributes to the Mn(2+) binding site. 1-deoxy-D-xylulose 5-phosphate contacts are provided by S153, E154, S178, and H201. E154 contacts Mn(2+). G207 is an NADPH binding site. 1-deoxy-D-xylulose 5-phosphate contacts are provided by S214, N219, K220, and E223. E223 contacts Mn(2+).

It belongs to the DXR family. The cofactor is Mg(2+). Mn(2+) serves as cofactor.

The enzyme catalyses 2-C-methyl-D-erythritol 4-phosphate + NADP(+) = 1-deoxy-D-xylulose 5-phosphate + NADPH + H(+). It functions in the pathway isoprenoid biosynthesis; isopentenyl diphosphate biosynthesis via DXP pathway; isopentenyl diphosphate from 1-deoxy-D-xylulose 5-phosphate: step 1/6. Functionally, catalyzes the NADPH-dependent rearrangement and reduction of 1-deoxy-D-xylulose-5-phosphate (DXP) to 2-C-methyl-D-erythritol 4-phosphate (MEP). This is 1-deoxy-D-xylulose 5-phosphate reductoisomerase from Ruegeria sp. (strain TM1040) (Silicibacter sp.).